Reading from the N-terminus, the 737-residue chain is ARMADILLO BTB ARABIDOPSIS PROTEIN 1 (737 aa).

9 ARM repeats span residues 112–154 (DENV…KDCA), 165–212 (PGYQ…NIAH), 215–254 (PRIKTNIRVEGGIAPLVELLNFPDVKVQRAAAGALRTVSF), 257–296 (DENKSQIVELNALPTLVLMLQSQDSTVHGEAIGAIGNLVH), 299–338 (PDIKKEVIRAGALQPVIGLLSSTCLETQREAALLIGQFAA), 341–380 (SDCKVHIAQRGAITPLIKMLESSDEQVVEMSAFALGRLAQ), 382–421 (AHNQAGIAHRGGIISLLNLLDVKTGSVQHNAAFALYGLAD), 456–495 (LKRLQNKIHGPVLNQLLYLMRTAEKTVQIRIALALAHLCD), and 497–536 (KDGKLIFIDNNGVEFLLELLYFSSNKQQRYSSSALYELAK). Positions 568-635 (SDVTFLIDGK…IYSGRINIAK (68 aa)) constitute a BTB domain.

In terms of assembly, forms a heterodimeric complex with TCP24. Interacts with the origin recognition complex (preRC) components ORC1A, ORC1B, CDT1A and CDT1B. Interacts with DUF7/AIP1. In terms of tissue distribution, weakly expressed in the emerging lateral roots and mainly expressed in the shoot apex, young leaves and flower buds.

The protein localises to the nucleus. Its pathway is protein modification; protein ubiquitination. Functionally, may act as a substrate-specific adapter of an E3 ubiquitin-protein ligase complex (CUL3-RBX1-BTB) which mediates the ubiquitination and subsequent proteasomal degradation of target proteins. In association with TCP24, exerts a negative role in cell proliferation in leaves, possibly by inhibiting mitotic DNA replication. This chain is ARMADILLO BTB ARABIDOPSIS PROTEIN 1 (ABAP1), found in Arabidopsis thaliana (Mouse-ear cress).